Consider the following 284-residue polypeptide: 4-diphosphocytidyl-2-C-methyl-D-erythritol kinase (284 aa).

Lysine 14 is a catalytic residue. 98 to 108 (PMGGGLGGGSS) is an ATP binding site. Aspartate 140 is an active-site residue.

Belongs to the GHMP kinase family. IspE subfamily.

It carries out the reaction 4-CDP-2-C-methyl-D-erythritol + ATP = 4-CDP-2-C-methyl-D-erythritol 2-phosphate + ADP + H(+). It functions in the pathway isoprenoid biosynthesis; isopentenyl diphosphate biosynthesis via DXP pathway; isopentenyl diphosphate from 1-deoxy-D-xylulose 5-phosphate: step 3/6. Functionally, catalyzes the phosphorylation of the position 2 hydroxy group of 4-diphosphocytidyl-2C-methyl-D-erythritol. In Shewanella sp. (strain MR-4), this protein is 4-diphosphocytidyl-2-C-methyl-D-erythritol kinase.